The sequence spans 235 residues: Serine/arginine-rich splicing factor 7 (235 aa).

Positions 11–84 (TKVYVGNLGT…SRVRVELSTG (74 aa)) constitute an RRM domain. Lysine 24 is subject to N6-acetyllysine; alternate. Lysine 24 participates in a covalent cross-link: Glycyl lysine isopeptide (Lys-Gly) (interchain with G-Cter in SUMO2); alternate. Residue serine 32 is modified to Phosphoserine. Residues 81 to 98 (LSTGMPRRSRFDRPPARR) are sufficient for interaction with NXF1. The CCHC-type zinc finger occupies 104–120 (DRCYECGEKGHYAYDCH). Basic residues predominate over residues 123 to 180 (SRRRRSRSRSRSHSRSRGRRYSRSRSRSRGRRSRSASPRRSRSVSLRRSRSASLRRSR). The tract at residues 123 to 235 (SRRRRSRSRS…RRSASPERVD (113 aa)) is disordered. 4 consecutive repeat copies span residues 153–160 (RRSRSASP), 161–168 (RRSRSVSL), 169–176 (RRSRSASL), and 177–184 (RRSRSGSI). The 6 X 8 AA repeats of R-R-S-R-S-X-S-X stretch occupies residues 153 to 223 (RRSRSASPRR…SPKRSRSPSG (71 aa)). A phosphoserine mark is found at serine 163, serine 165, and serine 167. Residues serine 181, serine 183, serine 189, serine 191, and serine 193 each carry the phosphoserine modification. The segment covering 187–219 (SRSRSRSRSRSRSLSRPRSSRSKSRSPSPKRSR) has biased composition (basic residues). The stretch at 208–215 (SKSRSPSP) is one 5; approximate repeat. One copy of the 6; approximate repeat lies at 216 to 223 (KRSRSPSG). A phosphoserine mark is found at serine 228 and serine 230.

It belongs to the splicing factor SR family. In terms of assembly, found in large molecular weight complexes containing CCNL1 and the p110 isoforms of either CDC2L1 or CDC2L2. Interacts with CCNL2 and CPSF6. Interacts with NXF1. Interacts with YTHDC1. In terms of processing, extensively phosphorylated on serine residues in the RS domain.

Its subcellular location is the nucleus. It is found in the cytoplasm. Functionally, required for pre-mRNA splicing. Represses the splicing of MAPT/Tau exon 10. May function as export adapter involved in mRNA nuclear export such as of histone H2A. Binds mRNA which is thought to be transferred to the NXF1-NXT1 heterodimer for export (TAP/NXF1 pathway); enhances NXF1-NXT1 RNA-binding activity. RNA-binding is semi-sequence specific. The polypeptide is Serine/arginine-rich splicing factor 7 (SRSF7) (Bos taurus (Bovine)).